A 558-amino-acid chain; its full sequence is NAD-dependent malic enzyme 2 (558 aa).

Residue Tyr101 is the Proton donor of the active site. Position 154 (Arg154) interacts with NAD(+). The Proton acceptor role is filled by Lys172. The a divalent metal cation site is built by Glu243, Asp244, and Asp267. Asp267 and Asn411 together coordinate NAD(+).

It belongs to the malic enzymes family. As to quaternary structure, homotetramer. Mg(2+) is required as a cofactor. The cofactor is Mn(2+).

It carries out the reaction (S)-malate + NAD(+) = pyruvate + CO2 + NADH. The enzyme catalyses oxaloacetate + H(+) = pyruvate + CO2. In Photobacterium profundum (strain SS9), this protein is NAD-dependent malic enzyme 2.